We begin with the raw amino-acid sequence, 481 residues long: Leukocyte immunoglobulin-like receptor subfamily A member 6 (481 aa).

The first 23 residues, 1–23 (MTPALTALLCLGLSLGPRTRVQA), serve as a signal peptide directing secretion. At 24–447 (GPFPKPTLWA…SHAKDYTVEN (424 aa)) the chain is on the extracellular side. Cysteine 49 and cysteine 98 form a disulfide bridge. A compositionally biased stretch (basic and acidic residues) spans 59 to 70 (QLDKEGSPEPLD). Residues 59–78 (QLDKEGSPEPLDRNNPLEPK) are disordered. A glycan (N-linked (GlcNAc...) asparagine) is linked at asparagine 139. Intrachain disulfides connect cysteine 144–cysteine 196 and cysteine 245–cysteine 296. 2 consecutive Ig-like C2-type domains span residues 225–314 (PSLL…DPLN) and 323–408 (DTVS…HLLS). Asparagine 301 and asparagine 340 each carry an N-linked (GlcNAc...) asparagine glycan. Cysteine 345 and cysteine 396 are oxidised to a cystine. The disordered stretch occupies residues 419–439 (SGHSGGSSLPPTGPPSTPASH). Residues 448-468 (LIRMGMAGLVLVFLGILLFEA) form a helical membrane-spanning segment. Residues 469-481 (QHSQRNPQDAAGR) lie on the Cytoplasmic side of the membrane.

It localises to the membrane. Functionally, may act as receptor for class I MHC antigens. The sequence is that of Leukocyte immunoglobulin-like receptor subfamily A member 6 (LILRA6) from Homo sapiens (Human).